Reading from the N-terminus, the 252-residue chain is 3-dehydroquinate dehydratase (252 aa).

Residues serine 21, 46–48 (EWR), and arginine 82 each bind 3-dehydroquinate. Histidine 143 acts as the Proton donor/acceptor in catalysis. The Schiff-base intermediate with substrate role is filled by lysine 170. The 3-dehydroquinate site is built by arginine 213, serine 232, and glutamine 236.

This sequence belongs to the type-I 3-dehydroquinase family. Homodimer.

The catalysed reaction is 3-dehydroquinate = 3-dehydroshikimate + H2O. It participates in metabolic intermediate biosynthesis; chorismate biosynthesis; chorismate from D-erythrose 4-phosphate and phosphoenolpyruvate: step 3/7. In terms of biological role, involved in the third step of the chorismate pathway, which leads to the biosynthesis of aromatic amino acids. Catalyzes the cis-dehydration of 3-dehydroquinate (DHQ) and introduces the first double bond of the aromatic ring to yield 3-dehydroshikimate. This chain is 3-dehydroquinate dehydratase, found in Shigella dysenteriae serotype 1 (strain Sd197).